Consider the following 712-residue polypeptide: Anaerobic ribonucleoside-triphosphate reductase (712 aa).

The ATP-cone domain maps to 3-92 (PHVMKRDGCK…EYRHDRDIQR (90 aa)). Residues 583-708 (KKVNPYDKID…VKRRVKHLGN (126 aa)) enclose the Glycine radical domain. Cysteine 644, cysteine 647, cysteine 662, and cysteine 665 together coordinate Zn(2+). Position 681 is a glycine radical (glycine 681).

It belongs to the anaerobic ribonucleoside-triphosphate reductase family. In terms of assembly, forms a tetramer composed of two NrdD and two NrdG subunits.

It catalyses the reaction a ribonucleoside 5'-triphosphate + formate + H(+) = a 2'-deoxyribonucleoside 5'-triphosphate + CO2 + H2O. Activated under anaerobic conditions by NrdG, a tightly associated activase. Activation involves the formation of a glycyl radical at Gly-681. Catalyzes the conversion of ribonucleotides into deoxyribonucleotides, which are required for DNA synthesis and repair. The polypeptide is Anaerobic ribonucleoside-triphosphate reductase (nrdD) (Salmonella typhimurium (strain LT2 / SGSC1412 / ATCC 700720)).